A 2873-amino-acid polypeptide reads, in one-letter code: Serine/threonine-protein kinase TEL1 (2873 aa).

In terms of domain architecture, FAT spans 1830–2425; the sequence is KFYQLACEVK…LYLLLSLKKH (596 aa). The 310-residue stretch at 2530–2839 folds into the PI3K/PI4K catalytic domain; sequence DKKISIATSG…AIMTVIEKLN (310 aa). Positions 2536–2542 are G-loop; sequence ATSGLSL. The interval 2706–2714 is catalytic loop; that stretch reads GLGDRHCNN. The segment at 2726–2750 is activation loop; the sequence is HIDLGVAFDQGKRLAIPETVPFRLT. The region spanning 2841–2873 is the FATC domain; that stretch reads NGLSTEAAVRELIQEATSTQNLALIYFGWSPFY.

Belongs to the PI3/PI4-kinase family. ATM subfamily. Associates with DNA double-strand breaks.

It is found in the nucleus. The protein resides in the chromosome. The protein localises to the telomere. It carries out the reaction L-seryl-[protein] + ATP = O-phospho-L-seryl-[protein] + ADP + H(+). The enzyme catalyses L-threonyl-[protein] + ATP = O-phospho-L-threonyl-[protein] + ADP + H(+). Functionally, serine/threonine protein kinase which activates checkpoint signaling upon genotoxic stresses such as ionizing radiation (IR), ultraviolet light (UV), or DNA replication stalling, thereby acting as a DNA damage sensor. Recognizes the substrate consensus sequence [ST]-Q. Phosphorylates histone H2A to form H2AS128ph (gamma-H2A) at sites of DNA damage, involved in the regulation of DNA damage response mechanism. Required for the control of telomere length and genome stability. This is Serine/threonine-protein kinase TEL1 (TEL1) from Candida albicans (strain SC5314 / ATCC MYA-2876) (Yeast).